The chain runs to 239 residues: Ribonuclease PH (239 aa).

Phosphate is bound by residues arginine 86 and 124–126 (GTR).

Belongs to the RNase PH family. Homohexameric ring arranged as a trimer of dimers.

It carries out the reaction tRNA(n+1) + phosphate = tRNA(n) + a ribonucleoside 5'-diphosphate. Its function is as follows. Phosphorolytic 3'-5' exoribonuclease that plays an important role in tRNA 3'-end maturation. Removes nucleotide residues following the 3'-CCA terminus of tRNAs; can also add nucleotides to the ends of RNA molecules by using nucleoside diphosphates as substrates, but this may not be physiologically important. Probably plays a role in initiation of 16S rRNA degradation (leading to ribosome degradation) during starvation. This chain is Ribonuclease PH, found in Anaeromyxobacter dehalogenans (strain 2CP-C).